The sequence spans 109 residues: Biphenyl dioxygenase system ferredoxin subunit (109 aa).

The 97-residue stretch at 4 to 100 folds into the Rieske domain; that stretch reads TRVCDRRDVP…IRIEDNDVLV (97 aa). [2Fe-2S] cluster-binding residues include cysteine 43, histidine 45, cysteine 63, and histidine 66.

It belongs to the bacterial ring-hydroxylating dioxygenase ferredoxin component family. In terms of assembly, this dioxygenase system consists of four proteins: the two subunits of the hydroxylase component (BphA and BphE), a ferredoxin (BphF) and a ferredoxin reductase (BphG).

In terms of biological role, this protein seems to be a 2Fe-2S ferredoxin. The protein is Biphenyl dioxygenase system ferredoxin subunit (bphF) of Paraburkholderia xenovorans (strain LB400).